The primary structure comprises 207 residues: Nuclear transcription factor Y subunit beta (207 aa).

The tract at residues 1–52 is a domain; sequence MTMDGDSSTTDASQLGISADYIGGSHYVIQPHDDTEDSMNDHEDTNGSKESF. The disordered stretch occupies residues 27–52; the sequence is YVIQPHDDTEDSMNDHEDTNGSKESF. A compositionally biased stretch (basic and acidic residues) spans 39 to 52; that stretch reads MNDHEDTNGSKESF. The interval 53–142 is b domain; sequence REQDIYLPIA…PLKLYLQKFR (90 aa). A DNA-binding region spans residues 59–65; the sequence is LPIANVA. Residues 86 to 97 are subunit association domain (SAD); sequence VQECVSEFISFI. Residue Lys-140 forms a Glycyl lysine isopeptide (Lys-Gly) (interchain with G-Cter in ubiquitin) linkage. Residues 143 to 207 are c domain; that stretch reads EAMKGEKGIG…ISGVQQIQFS (65 aa).

It belongs to the NFYB/HAP3 subunit family. In terms of assembly, heterotrimeric transcription factor composed of three components, NF-YA, NF-YB and NF-YC. NF-YB and NF-YC must interact and dimerize for NF-YA association and DNA binding. Interacts with C1QBP. Post-translationally, monoubiquitination at Lys-140 plays an important role in transcriptional activation by allowing the deposition of histone H3 methylations as well as histone H2B monoubiquitination at 'Lys-121'.

The protein localises to the nucleus. In terms of biological role, component of the sequence-specific heterotrimeric transcription factor (NF-Y) which specifically recognizes a 5'-CCAAT-3' box motif found in the promoters of its target genes. NF-Y can function as both an activator and a repressor, depending on its interacting cofactors. This Bos taurus (Bovine) protein is Nuclear transcription factor Y subunit beta (NFYB).